A 314-amino-acid chain; its full sequence is Peroxisome biogenesis factor 10 (314 aa).

Topologically, residues 1–7 are peroxisomal matrix; the sequence is MNTYVAE. Residues 8 to 37 traverse the membrane as a helical segment; it reads IGEIVRSQRRDEEYIEDITERLSRVSKELL. A topological domain (cytoplasmic) is located at residue Gly-38. The helical transmembrane segment at 39–60 threads the bilayer; the sequence is QRTWIRWFPYLKSIASTLYYTS. At 61–90 the chain is on the peroxisomal matrix side; it reads TVVLGNQTLGEEYVHLFESNGLERTVPSIP. Residues 91 to 110 form a helical membrane-spanning segment; the sequence is SRISFVLLHSAFPLISNYLI. The Cytoplasmic segment spans residues 111 to 142; that stretch reads QKAESTLTHPSTESFLGIPIRKNQKARQSFLD. The helical transmembrane segment at 143–166 threads the bilayer; it reads VFFWLRTKLFPQLQRAHIALFYIT. The Peroxisomal matrix segment spans residues 167-197; sequence GAYYSIARRFTGIRFLSASAHSDIPALKVYR. A helical membrane pass occupies residues 198 to 218; the sequence is FLGYITLIQLAVSIGISLYSF. The Cytoplasmic portion of the chain corresponds to 219–314; that stretch reads LEQEKFNNKL…PRDVTPLLNL (96 aa). The Zn(2+) site is built by Cys-255, Cys-258, Cys-269, His-271, Cys-274, Cys-277, Cys-296, and Cys-299. The RING-type zinc finger occupies 255–300; the sequence is CSICLENKNPSALFCGHLFCWTCIQEHAVAATSSASTSSARCPQCR.

It belongs to the pex2/pex10/pex12 family. Component of the PEX2-PEX10-PEX12 retrotranslocation channel.

The protein localises to the peroxisome membrane. The enzyme catalyses S-ubiquitinyl-[E2 ubiquitin-conjugating enzyme]-L-cysteine + [acceptor protein]-L-lysine = [E2 ubiquitin-conjugating enzyme]-L-cysteine + N(6)-ubiquitinyl-[acceptor protein]-L-lysine.. It functions in the pathway protein modification; protein ubiquitination. Its activity is regulated as follows. The E3 ubiquitin-protein ligase activity is stimulated by PEX12/prx-12. In terms of biological role, E3 ubiquitin-protein ligase component of a retrotranslocation channel required for peroxisome organization by mediating export of the PEX5/prx-5 receptor from peroxisomes to the cytosol, thereby promoting PEX5/prx-5 recycling. The retrotranslocation channel is composed of PEX2/prx-2, PEX10/prx-10 and PEX12/prx-12; each subunit contributing transmembrane segments that coassemble into an open channel that specifically allows the passage of PEX5/prx-5 through the peroxisomal membrane. PEX10/prx-10 also regulates PEX5 recycling by acting as a E3 ubiquitin-protein ligase. When PEX5/prx-5 recycling is compromised, PEX10/prx-10 catalyzes polyubiquitination of PEX5/prx-5 during its passage through the retrotranslocation channel, leading to its degradation. This chain is Peroxisome biogenesis factor 10, found in Caenorhabditis elegans.